The primary structure comprises 208 residues: Type 4 adapter protein LvgA (208 aa).

Residues 184–208 are disordered; that stretch reads GYGYPPESPRENYKHPVSSATTARK.

The T4BSS is a complex nanomachine composed of several subcomplexes. This subunit is part of the Type IV Coupling Complex (T4CC), a subcomplex composed of the DotLMNYZ core and the IcmSW-LvgA adapter subunits, linked by the C-terminal tail of DotL.

It localises to the cytoplasm. Functionally, component of the Dot/Icm type IVB secretion system (T4BSS), which is used to inject bacterial effector proteins into eukaryotic host cells. Part of a subcomplex which recruits effector proteins and delivers them to the core transmembrane subcomplex. Is a critical subunit for binding a subset of effector proteins. Recognizes more than one type of binding motif. May be a critical factor that confers host specificity. Necessary for full virulence of the bacterium in guinea pigs and presumably humans. This chain is Type 4 adapter protein LvgA, found in Legionella pneumophila.